A 541-amino-acid polypeptide reads, in one-letter code: Glucose-6-phosphate isomerase (541 aa).

Catalysis depends on E346, which acts as the Proton donor. Active-site residues include H377 and K506.

The protein belongs to the GPI family.

It is found in the cytoplasm. It catalyses the reaction alpha-D-glucose 6-phosphate = beta-D-fructose 6-phosphate. Its pathway is carbohydrate biosynthesis; gluconeogenesis. The protein operates within carbohydrate degradation; glycolysis; D-glyceraldehyde 3-phosphate and glycerone phosphate from D-glucose: step 2/4. Its function is as follows. Catalyzes the reversible isomerization of glucose-6-phosphate to fructose-6-phosphate. The protein is Glucose-6-phosphate isomerase of Rhizobium rhizogenes (strain K84 / ATCC BAA-868) (Agrobacterium radiobacter).